The primary structure comprises 483 residues: Cysteine--tRNA ligase (483 aa).

Cys29 serves as a coordination point for Zn(2+). The 'HIGH' region signature appears at 31 to 41 (ITVYDYCHLGH). Residues Cys215, His240, and Glu244 each coordinate Zn(2+). The short motif at 272–276 (KMSKS) is the 'KMSKS' region element. Lys275 contributes to the ATP binding site.

The protein belongs to the class-I aminoacyl-tRNA synthetase family. Monomer. Zn(2+) serves as cofactor.

The protein localises to the cytoplasm. The enzyme catalyses tRNA(Cys) + L-cysteine + ATP = L-cysteinyl-tRNA(Cys) + AMP + diphosphate. In Synechocystis sp. (strain ATCC 27184 / PCC 6803 / Kazusa), this protein is Cysteine--tRNA ligase (cysS).